The sequence spans 297 residues: N-acetylmuramic acid 6-phosphate etherase (297 aa).

The region spanning 55–218 (AAAALKSGGR…STGAMVKFGK (164 aa)) is the SIS domain. The active-site Proton donor is Glu83. Residue Glu114 is part of the active site.

The protein belongs to the GCKR-like family. MurNAc-6-P etherase subfamily. In terms of assembly, homodimer.

It carries out the reaction N-acetyl-D-muramate 6-phosphate + H2O = N-acetyl-D-glucosamine 6-phosphate + (R)-lactate. Its pathway is amino-sugar metabolism; 1,6-anhydro-N-acetylmuramate degradation. The protein operates within amino-sugar metabolism; N-acetylmuramate degradation. It functions in the pathway cell wall biogenesis; peptidoglycan recycling. In terms of biological role, specifically catalyzes the cleavage of the D-lactyl ether substituent of MurNAc 6-phosphate, producing GlcNAc 6-phosphate and D-lactate. Together with AnmK, is also required for the utilization of anhydro-N-acetylmuramic acid (anhMurNAc) either imported from the medium or derived from its own cell wall murein, and thus plays a role in cell wall recycling. The polypeptide is N-acetylmuramic acid 6-phosphate etherase (Salmonella choleraesuis (strain SC-B67)).